Reading from the N-terminus, the 259-residue chain is Bisphosphoglycerate mutase (259 aa).

The residue at position 2 (serine 2) is an N-acetylserine. Substrate contacts are provided by residues 10–17 (RHGEGAWN), 23–24 (CS), arginine 62, 89–92 (ERHY), arginine 100, and 116–117 (RR). Catalysis depends on histidine 11, which acts as the Tele-phosphohistidine intermediate. Glutamate 89 acts as the Proton donor/acceptor in catalysis. Threonine 122 is modified (phosphothreonine). Residue 189 to 190 (GN) participates in substrate binding.

The protein belongs to the phosphoglycerate mutase family. BPG-dependent PGAM subfamily. As to quaternary structure, homodimer.

It catalyses the reaction (2R)-3-phospho-glyceroyl phosphate = (2R)-2,3-bisphosphoglycerate + H(+). The catalysed reaction is (2R)-2-phosphoglycerate = (2R)-3-phosphoglycerate. With respect to regulation, at alkaline pH BPGM favors the synthase reaction; however, at lower pH the phosphatase reaction is dominant. Inhibited by citrate. Plays a major role in regulating hemoglobin oxygen affinity by controlling the levels of its allosteric effector 2,3-bisphosphoglycerate (2,3-BPG). Also exhibits mutase (EC 5.4.2.11) activity. In Macaca fascicularis (Crab-eating macaque), this protein is Bisphosphoglycerate mutase (BPGM).